We begin with the raw amino-acid sequence, 258 residues long: Na(+)-translocating NADH-quinone reductase subunit C (258 aa).

Residues 14 to 34 form a helical membrane-spanning segment; it reads LIVVLAVSLICSVIVAGAVVG. Ser-226 is subject to FMN phosphoryl serine.

Belongs to the NqrC family. As to quaternary structure, composed of six subunits; NqrA, NqrB, NqrC, NqrD, NqrE and NqrF. The cofactor is FMN.

It localises to the cell inner membrane. It carries out the reaction a ubiquinone + n Na(+)(in) + NADH + H(+) = a ubiquinol + n Na(+)(out) + NAD(+). In terms of biological role, NQR complex catalyzes the reduction of ubiquinone-1 to ubiquinol by two successive reactions, coupled with the transport of Na(+) ions from the cytoplasm to the periplasm. NqrA to NqrE are probably involved in the second step, the conversion of ubisemiquinone to ubiquinol. In Neisseria meningitidis serogroup A / serotype 4A (strain DSM 15465 / Z2491), this protein is Na(+)-translocating NADH-quinone reductase subunit C.